The following is a 114-amino-acid chain: Large ribosomal subunit protein P2v (114 aa).

The interval 74 to 114 is disordered; sequence VASGGGGGAAPAAEPASVESKKKEEEKEESEDDGGMMSLFD. S103 carries the phosphoserine modification.

Belongs to the eukaryotic ribosomal protein P1/P2 family. P1 and P2 exist as dimers at the large ribosomal subunit. Post-translationally, phosphorylated.

In terms of biological role, plays an important role in the elongation step of protein synthesis. This is Large ribosomal subunit protein P2v (RPP2E) from Arabidopsis thaliana (Mouse-ear cress).